A 556-amino-acid chain; its full sequence is 2-succinyl-5-enolpyruvyl-6-hydroxy-3-cyclohexene-1-carboxylate synthase (556 aa).

The protein belongs to the TPP enzyme family. MenD subfamily. Homodimer. Mg(2+) serves as cofactor. Mn(2+) is required as a cofactor. It depends on thiamine diphosphate as a cofactor.

It carries out the reaction isochorismate + 2-oxoglutarate + H(+) = 5-enolpyruvoyl-6-hydroxy-2-succinyl-cyclohex-3-ene-1-carboxylate + CO2. Its pathway is quinol/quinone metabolism; 1,4-dihydroxy-2-naphthoate biosynthesis; 1,4-dihydroxy-2-naphthoate from chorismate: step 2/7. It functions in the pathway quinol/quinone metabolism; menaquinone biosynthesis. In terms of biological role, catalyzes the thiamine diphosphate-dependent decarboxylation of 2-oxoglutarate and the subsequent addition of the resulting succinic semialdehyde-thiamine pyrophosphate anion to isochorismate to yield 2-succinyl-5-enolpyruvyl-6-hydroxy-3-cyclohexene-1-carboxylate (SEPHCHC). The chain is 2-succinyl-5-enolpyruvyl-6-hydroxy-3-cyclohexene-1-carboxylate synthase from Escherichia coli (strain SMS-3-5 / SECEC).